The following is a 383-amino-acid chain: Glutamate 5-kinase (383 aa).

Residue Lys17 participates in ATP binding. Ser64, Asp151, and Asn165 together coordinate substrate. Position 185-186 (185-186 (SD)) interacts with ATP. Positions 291–367 (SGTIRVDAGA…DEIEGILGYN (77 aa)) constitute a PUA domain.

The protein belongs to the glutamate 5-kinase family.

It localises to the cytoplasm. The enzyme catalyses L-glutamate + ATP = L-glutamyl 5-phosphate + ADP. It functions in the pathway amino-acid biosynthesis; L-proline biosynthesis; L-glutamate 5-semialdehyde from L-glutamate: step 1/2. Its function is as follows. Catalyzes the transfer of a phosphate group to glutamate to form L-glutamate 5-phosphate. This is Glutamate 5-kinase from Methanosarcina barkeri (strain Fusaro / DSM 804).